Reading from the N-terminus, the 419-residue chain is MKFTELTVTEFDNFVQNPSLESHYFQVKENIVTRENDGFEVVLLGIKDDNNKVIAASLFSKIPTMGSYVYYSNRGPVMDFSDLGLVDYYLKELDKYLQQHQCLYVKLDPYWLYHLYDKDIVPFEGREKNDALVNLFKSHGYEHHGFTTEYDTSSQVRWMGVLNLEGKTPETLKKTFDSQRKRNINKAINYGVKVRFLERDEFNLFLDLYRETEERAGFVSKTDDYFYNFIDTYGDKVLVPLAYIDLDEYVLKLQQELNDKENRRDQMMAKENKSDKQMKKIAELDKQIDHDQHELLNASELSKTDGSILNLASGVYFANAYEVNYFSGGSSEKYNQFMGPYMMHWFMINYCFDNGYDRYNFYGLSGDFTENSEDYGVYRFKRGFNVQIEELIGDFYKPIHKVKYWLFTTLDKLRKKLKK.

Belongs to the FemABX family. Homodimer. Interacts with FemA.

The protein localises to the cytoplasm. It carries out the reaction MurNAc-L-Ala-D-isoglutaminyl-L-Lys-(N(6)-tri-Gly)-D-Ala-D-Ala-diphospho-di-trans,octa-cis-undecaprenyl-GlcNAc + 2 glycyl-tRNA(Gly) = MurNAc-L-Ala-D-isoglutaminyl-L-Lys-(N(6)-penta-Gly)-D-Ala-D-Ala-diphospho-di-trans,octa-cis-undecaprenyl-GlcNAc + 2 tRNA(Gly) + 2 H(+). Functionally, catalyzes the formation of the pentaglycine interpeptide bridge, which is characteristic of the S.aureus peptidoglycan. Adds glycines 4 and 5 of the pentaglycine bridge, using glycyl-tRNA(Gly) as donor. The polypeptide is Aminoacyltransferase FemB (femB) (Staphylococcus aureus (strain bovine RF122 / ET3-1)).